A 702-amino-acid polypeptide reads, in one-letter code: MNPIVKSFEYGQHTVTLETGVIARQANAAVLASMGDTTVLVTVVGKKAEDVGRDFFPLTVNYQEKTYAAGKIPGGFFKREGRPSENETLIARLIDRPIRPLFPNGFKNEVQVIITVVSVDPEINPDVISMIGTSAALSISDLPFNGPLGVARVGYTNGEYVLNPNVSQLAESDLDLVVAGTQGAVLMVESEAASLPEEVMLGGVVYGHDQQQVVINAINELTAEAGKTKWDWTAPAEDTDLVEKIKGLAEAELTNAYQIADKHERRDAVIALKNAAVAKLVEENADVDLREVDKLLGSLEKKVVRSRIISGSPRIDGREPDMVRALNVMAGVLPRTHGSSLFTRGETQALVTCTLGTERDAQKVDSIMGEYTNRFMLHYNFPPYSVGETGMVGSPKRREIGHGKLAWRGINAVMPTAEEFPYSVRVVSEITESNGSSSMASVCGTSLALMDAGVPIKTSVAGIAMGLVKEGDDFVVLSDILGDEDHLGDMDFKVAGTRDGITALQMDIKIEGITKEIMQIALQQAYGARVHILNVMDQAISGHREDISDHAPRITTLKINPEKIRDVIGKGGATIRALTEETGTTIELEDDGTVKIASANGEATKEAIRRIEEITAEVEVGTVYNGKVVRIVDFGAFVTILPGKDGLVHISQIAEERVANVSDYLQVGQEVKVKVMEVDRQGRVRLSMKEAQPKAEAAPAAE.

Mg(2+) is bound by residues D485 and D491. The 60-residue stretch at 552-611 (PRITTLKINPEKIRDVIGKGGATIRALTEETGTTIELEDDGTVKIASANGEATKEAIRRI) folds into the KH domain. The S1 motif domain maps to 621–689 (GTVYNGKVVR…RQGRVRLSMK (69 aa)).

Belongs to the polyribonucleotide nucleotidyltransferase family. Component of the RNA degradosome, which is a multiprotein complex involved in RNA processing and mRNA degradation. It depends on Mg(2+) as a cofactor.

The protein resides in the cytoplasm. The enzyme catalyses RNA(n+1) + phosphate = RNA(n) + a ribonucleoside 5'-diphosphate. Functionally, involved in mRNA degradation. Catalyzes the phosphorolysis of single-stranded polyribonucleotides processively in the 3'- to 5'-direction. The sequence is that of Polyribonucleotide nucleotidyltransferase from Shewanella woodyi (strain ATCC 51908 / MS32).